A 104-amino-acid chain; its full sequence is Large ribosomal subunit protein uL24 (104 aa).

The protein belongs to the universal ribosomal protein uL24 family. As to quaternary structure, part of the 50S ribosomal subunit.

Its function is as follows. One of two assembly initiator proteins, it binds directly to the 5'-end of the 23S rRNA, where it nucleates assembly of the 50S subunit. In terms of biological role, one of the proteins that surrounds the polypeptide exit tunnel on the outside of the subunit. The sequence is that of Large ribosomal subunit protein uL24 from Shewanella piezotolerans (strain WP3 / JCM 13877).